We begin with the raw amino-acid sequence, 330 residues long: uncharacterized protein (330 aa).

This is an uncharacterized protein from Schizosaccharomyces pombe (strain 972 / ATCC 24843) (Fission yeast).